The primary structure comprises 345 residues: rRNA 2'-O-methyltransferase fibrillarin (345 aa).

Residues 1-114 form a disordered region; it reads MGKPGFSPRG…GFKGGKTVTI (114 aa). The span at 8-108 shows a compositional bias: gly residues; sequence PRGGGGGGGG…RGGGAGGFKG (101 aa). Arginine 9, arginine 23, arginine 25, arginine 41, arginine 43, arginine 49, arginine 52, arginine 59, arginine 64, arginine 72, arginine 78, arginine 84, arginine 89, arginine 94, and arginine 99 each carry asymmetric dimethylarginine. S-adenosyl-L-methionine contacts are provided by residues 198–199, 217–218, 242–243, and 262–265; these read TT, EF, DA, and DVAQ.

This sequence belongs to the methyltransferase superfamily. Fibrillarin family. In terms of assembly, component of box C/D small nucleolar ribonucleoprotein (snoRNP) particles. It is associated with the U3, U8 and U13 small nuclear RNAs. In terms of processing, by homology to other fibrillarins, some or all of the N-terminal domain arginines are modified to asymmetric dimethylarginine (DMA).

It is found in the nucleus. The protein localises to the nucleolus. The enzyme catalyses L-glutaminyl-[histone H2A] + S-adenosyl-L-methionine = N(5)-methyl-L-glutaminyl-[histone H2A] + S-adenosyl-L-homocysteine + H(+). In terms of biological role, S-adenosyl-L-methionine-dependent methyltransferase that has the ability to methylate both RNAs and proteins. Involved in pre-rRNA processing. Utilizes the methyl donor S-adenosyl-L-methionine to catalyze the site-specific 2'-hydroxyl methylation of ribose moieties in pre-ribosomal RNA. Site specificity is provided by a guide RNA that base pairs with the substrate. Methylation occurs at a characteristic distance from the sequence involved in base pairing with the guide RNA. Also acts as a protein methyltransferase by mediating methylation of 'Gln-105' of histone H2A (H2AQ105me), a modification that impairs binding of the FACT complex and is specifically present at 35S ribosomal DNA locus. This chain is rRNA 2'-O-methyltransferase fibrillarin, found in Drosophila erecta (Fruit fly).